A 1470-amino-acid polypeptide reads, in one-letter code: MDEAALEPTLVQTLAVSTAKGGRYLSLSPSFQRCSLASWIKENIKKKECCFYVEDGREGICKCGYPKVQHCDEAIKPEDYMGEQWDKHRHVRETPTDAFGDISFGGLGQKTGKYVRVSSDTSCENLYQLMTEQWKLRSPNLLISVTGGAKNFYIKTHLKDKFRRGLIKVAQTTGAWILTGGTHAGVMKHVGMAVRDYTLSSGSMEGQIVVIGVAPWGVIHNRSTLIHPEGRFPAYYSLDEQGQGRLSCLDINHTHFLLVDDGTQGHYGVEIELRARLEKLISKLSLGNRESGVTIPVVCVVLDGGPGTLNTIYNSMLNHTPCVVLEGSGRLADVIAHVASVPVSKVTMALINRLLKRFFMQEYKNFTELQIIEWTKKIQDILRMPHLLTVFRIDEDKNYDVDVAILQALLKASRSDEHAGRHCWERQLELAVAWNRVDIAESEIFTEESQWTSSDLHPAMFSALVGDKPEFVRLLLENGVCVREFLEREETLCELYSHLPSCFFLRKLAKRVQGGKMRRGQEPLPGSRKVCLSHVSEEVRHLLGSFTQPLYIASRYKPTKDDVRLKVPSKGALDLPCSGEEWSADTVWDPGRDLFLWAVVQNNRELAEIGWEQCRDCIAAALAASKILRKLAQESGEDDSEEATEMLELANHYEKQAIGVFSECHSWDAQRAQKLLIRISPSWGRSTCLWLALEAHDKSFIAHSGVQALLTQIWCGELSVDNPHWKVLLCMIFFPLIYTGFLTFRRDEDIQRQAERTEQQKLAMESVFAGQSDGKIKRHLRGFSQKSELKPLNCSSRLMSFLKSPQVKFYWNIASYFGFLWLFAVVLMIDFQTSPSWRELLLYVWLTSLVCEEIRQLYHDFDGSGFRRKAKMYIKDLWNILDVLSIVLFIAGLICRLQASDTVFYIGKVILCIDFIIFCLRLMAIFSISRTLGPKIIIVRRMMLDLFFFMFLLSIWVVAYGVAKQGILIENEERLNWIIRGAVYEPYITIFGNFPTNIDNTLFDISSCSVNASDPLKPKCPMLNADNTPVFPEWLTIMMLCVYLLFANILLLNLLIAIFNYTFQEVQDNTDTIWKFQRYELIKEYHSRPALPPPFILLSHLILFIRGVFLRDLPQRHKNFRQELEQTEEEELLSWEAYMKDNYLASTRQDESQSVEHRIHDTAEKVGAMSELLEREQEMVSATMAKRLARLEEQVSESAKALRWIIDALKSQGCKSKVQPPLMRSKSSDRDDGDSSGQETDDEEAPHMFARQLQYPDSTVRRFPVPEEKVSWEVNFSPYQPPVYNQQDSSESDTSALDKHRNPGGRTGIRGKGALNTLGPNHILHPIFTRWRDAEHKVLEFLAVWEDAEKRWALLGGPAQPDEPLAQVLERILGKKLNEKTKTLLKAGEEVYKGYVDDSRNTDNAWVETSIITLHCDKNTPLMADLNHMVESSLSSHQPLQWREVSSDACRCSYQREALRQIAHHHNTYF.

The Cytoplasmic portion of the chain corresponds to 1–725 (MDEAALEPTL…GELSVDNPHW (725 aa)). ADP-D-ribose contacts are provided by residues Tyr267, Arg274, 305-308 (GPGT), and Arg330. Residues 726–738 (KVLLCMIFFPLIY) lie within the membrane without spanning it. Topologically, residues 739 to 808 (TGFLTFRRDE…MSFLKSPQVK (70 aa)) are cytoplasmic. Residues 809 to 829 (FYWNIASYFGFLWLFAVVLMI) form a helical membrane-spanning segment. Residues 830–836 (DFQTSPS) are Extracellular-facing. A helical transmembrane segment spans residues 837-857 (WRELLLYVWLTSLVCEEIRQL). Glu853 and Gln856 together coordinate Ca(2+). Over 858-876 (YHDFDGSGFRRKAKMYIKD) the chain is Cytoplasmic. The helical transmembrane segment at 877-897 (LWNILDVLSIVLFIAGLICRL) threads the bilayer. Asn879 is a Ca(2+) binding site. Over 898–905 (QASDTVFY) the chain is Extracellular. The chain crosses the membrane as a helical span at residues 906–926 (IGKVILCIDFIIFCLRLMAIF). Residues 927–941 (SISRTLGPKIIIVRR) are Cytoplasmic-facing. A helical transmembrane segment spans residues 942-968 (MMLDLFFFMFLLSIWVVAYGVAKQGIL). Residues 969–977 (IENEERLNW) are Extracellular-facing. The pore-forming intramembrane region spans 978-1002 (IIRGAVYEPYITIFGNFPTNIDNTL). The Selectivity filter motif lies at 991–993 (FGN). At 1003 to 1034 (FDISSCSVNASDPLKPKCPMLNADNTPVFPEW) the chain is on the extracellular side. Residues Cys1008 and Cys1020 are joined by a disulfide bond. An N-linked (GlcNAc...) asparagine glycan is attached at Asn1011. The helical transmembrane segment at 1035–1059 (LTIMMLCVYLLFANILLLNLLIAIF) threads the bilayer. The Cytoplasmic segment spans residues 1060 to 1087 (NYTFQEVQDNTDTIWKFQRYELIKEYHS). Glu1084 lines the Ca(2+) pocket. An intramembrane segment occupies 1088–1105 (RPALPPPFILLSHLILFI). Residues 1106 to 1470 (RGVFLRDLPQ…QIAHHHNTYF (365 aa)) are Cytoplasmic-facing. The interval 1157–1470 (HRIHDTAEKV…QIAHHHNTYF (314 aa)) is divergent Nudix hydrolase-like domain. 2 disordered regions span residues 1215 to 1256 (KSKV…LQYP) and 1281 to 1314 (PPVY…GKGA). Over residues 1231–1244 (DDGDSSGQETDDEE) the composition is skewed to acidic residues. A compositionally biased stretch (polar residues) spans 1283–1295 (VYNQQDSSESDTS). Positions 1398 and 1400 each coordinate ADP-D-ribose.

This sequence belongs to the transient receptor (TC 1.A.4) family. LTrpC subfamily. TRPM2 sub-subfamily. As to quaternary structure, homotetramer.

It localises to the cell membrane. It carries out the reaction Ca(2+)(in) = Ca(2+)(out). The enzyme catalyses Na(+)(in) = Na(+)(out). Activated by intracellular ADP-ribose. Ca(2+) and PI(4,5)P2 are required for channel opening by ADP-ribose. In terms of biological role, nonselective, voltage-independent cation channel that mediates Ca(2+) influx, leading to increased cytoplasmic Ca(2+) levels. Functions as a ligand-gated ion channel, gated by intracellular adenosine diphosphate ribose (ADP-ribose), Ca(2+), warm temperature, and oxidative stress. Binding of ADP-ribose to the cytoplasmic N-terminal region causes a conformation change; the channel is primed but still requires Ca(2+) binding to trigger channel opening. In Danio rerio (Zebrafish), this protein is Transient receptor potential cation channel subfamily M member 2.